We begin with the raw amino-acid sequence, 979 residues long: UPF0182 protein Mb0065 (979 aa).

The next 7 helical transmembrane spans lie at 19–41 (LVTA…DIYV), 63–85 (LAIV…LLAY), 114–136 (LFGW…FDWV), 174–196 (WLFV…FGGL), 208–230 (AARV…AYWL), 261–280 (LVLV…AIFL), and 285–307 (IPAM…WPLL). The disordered stretch occupies residues 898–948 (GTGRVATAPGGDAASAPPPGAGGPAPPQAVPPPRTTQPPAAPPRGPDVPPA). Residues 902–912 (VATAPGGDAAS) are compositionally biased toward low complexity. The segment covering 913–946 (APPPGAGGPAPPQAVPPPRTTQPPAAPPRGPDVP) has biased composition (pro residues).

The protein belongs to the UPF0182 family.

The protein localises to the cell membrane. The protein is UPF0182 protein Mb0065 of Mycobacterium bovis (strain ATCC BAA-935 / AF2122/97).